Reading from the N-terminus, the 518-residue chain is MTTDMDLEQLEYEKEVEEIEKWWATPKQSQIKRPYTASTVAVLSEVTKAYYPSSQQALKLYDLLREHRNKGTATLTYGVVDPVLASQASKAGLETIFVSGCLCGLSSVDEPGMDHADYPWDTVPKAVDRIFRSQNWHARRQKQFHLMKPAEERKQLPKYDYLLPIIADGDMGFGSVTSTMKMTKRFVESGVAMIHLDDLAIGLKRFTVGQGRTVVPTSEYLRRLTAVRLQFDIMKAETMLLCRCDTDHAEFITSVVDPRDHAYVLGATTKIESLIKALKDAESTGVSMKKARENWIERAKLMTFDEAVKSTATPKEYENYISAISKKPFHSISERQELAEKYLSNEVFFDWELPRSSDGQYFFKPTVQTVIERAIAAAPLGEMTWARMDYPKWQDIKAFHEGVRAVYPDRMFAFGFTGNYDFKAAGFSEEQLRNLTSDMAKLGVCWQVQPYFTCQVLNKASVDYSNIWKKDGIFGYVKTVQEPALKEDVDGFENEWCGTYFADKLLSAAGSSDKTIPY.

The protein belongs to the isocitrate lyase/PEP mutase superfamily. Isocitrate lyase family.

The protein resides in the mitochondrion matrix. It localises to the cytoplasm. It catalyses the reaction (2S,3R)-3-hydroxybutane-1,2,3-tricarboxylate = pyruvate + succinate. It functions in the pathway organic acid metabolism; propanoate degradation. In terms of biological role, catalyzes the formation of pyruvate and succinate from 2-methylisocitrate during the metabolism of endogenous propionyl-CoA. Does not act on isocitrate. In Schizosaccharomyces pombe (strain 972 / ATCC 24843) (Fission yeast), this protein is Mitochondrial 2-methylisocitrate lyase (icl2).